Here is a 460-residue protein sequence, read N- to C-terminus: 3-ketoacyl-CoA synthase 7 (460 aa).

A helical transmembrane segment spans residues 21–41; it reads FHQFLVASACVLIAVFGYYFF. An FAE domain is found at 38 to 328; that stretch reads YYFFKPRCII…YIISFIQRKW (291 aa). Residues C183, H262, H345, H349, and N382 contribute to the active site.

This sequence belongs to the thiolase-like superfamily. Chalcone/stilbene synthases family. Expressed in flowers.

The protein localises to the membrane. It catalyses the reaction a very-long-chain acyl-CoA + malonyl-CoA + H(+) = a very-long-chain 3-oxoacyl-CoA + CO2 + CoA. The protein operates within lipid metabolism; fatty acid biosynthesis. The chain is 3-ketoacyl-CoA synthase 7 from Arabidopsis thaliana (Mouse-ear cress).